A 339-amino-acid chain; its full sequence is Glyceraldehyde-3-phosphate dehydrogenase (339 aa).

Residues R13–I14, D35, and K84 each bind NAD(+). Residues S156–T158, T187, T216–G217, and R239 each bind D-glyceraldehyde 3-phosphate. Residue C157 is the Nucleophile of the active site. An NAD(+)-binding site is contributed by N321.

This sequence belongs to the glyceraldehyde-3-phosphate dehydrogenase family. As to quaternary structure, homotetramer.

The protein localises to the cytoplasm. The enzyme catalyses D-glyceraldehyde 3-phosphate + phosphate + NAD(+) = (2R)-3-phospho-glyceroyl phosphate + NADH + H(+). Its pathway is carbohydrate degradation; glycolysis; pyruvate from D-glyceraldehyde 3-phosphate: step 1/5. The chain is Glyceraldehyde-3-phosphate dehydrogenase (G3PD) from Brugia malayi (Filarial nematode worm).